Consider the following 526-residue polypeptide: Ribonuclease Y (526 aa).

Residues 10–30 traverse the membrane as a helical segment; it reads ITFILLIVVGALGGALVGYFI. The KH domain occupies 216–279; the sequence is TVTVVEIPNE…EVAKRALTIL (64 aa). An HD domain is found at 342–435; the sequence is VLKHSIEVAF…VAAADALSAA (94 aa).

This sequence belongs to the RNase Y family.

It is found in the cell membrane. Endoribonuclease that initiates mRNA decay. The polypeptide is Ribonuclease Y (Acholeplasma laidlawii (strain PG-8A)).